Reading from the N-terminus, the 310-residue chain is HPr kinase/phosphorylase (310 aa).

Active-site residues include His136 and Lys157. Gly151–Ser158 serves as a coordination point for ATP. Ser158 is a Mg(2+) binding site. Asp175 serves as the catalytic Proton acceptor; for phosphorylation activity. Proton donor; for dephosphorylation activity. The segment at Leu199–Asn208 is important for the catalytic mechanism of both phosphorylation and dephosphorylation. A Mg(2+)-binding site is contributed by Glu200. Arg241 is an active-site residue. The important for the catalytic mechanism of dephosphorylation stretch occupies residues Pro262–Arg267.

Belongs to the HPrK/P family. As to quaternary structure, homohexamer. It depends on Mg(2+) as a cofactor.

It catalyses the reaction [HPr protein]-L-serine + ATP = [HPr protein]-O-phospho-L-serine + ADP + H(+). The enzyme catalyses [HPr protein]-O-phospho-L-serine + phosphate + H(+) = [HPr protein]-L-serine + diphosphate. Catalyzes the ATP- as well as the pyrophosphate-dependent phosphorylation of a specific serine residue in HPr, a phosphocarrier protein of the phosphoenolpyruvate-dependent sugar phosphotransferase system (PTS). HprK/P also catalyzes the pyrophosphate-producing, inorganic phosphate-dependent dephosphorylation (phosphorolysis) of seryl-phosphorylated HPr (P-Ser-HPr). The two antagonistic activities of HprK/P are regulated by several intracellular metabolites, which change their concentration in response to the absence or presence of rapidly metabolisable carbon sources (glucose, fructose, etc.) in the growth medium. Therefore, by controlling the phosphorylation state of HPr, HPrK/P is a sensor enzyme that plays a major role in the regulation of carbon metabolism and sugar transport: it mediates carbon catabolite repression (CCR), and regulates PTS-catalyzed carbohydrate uptake and inducer exclusion. The sequence is that of HPr kinase/phosphorylase from Staphylococcus aureus (strain Mu3 / ATCC 700698).